The primary structure comprises 501 residues: Cytochrome P450 2J1 (501 aa).

Cys-447 provides a ligand contact to heme.

The protein belongs to the cytochrome P450 family. Requires heme as cofactor. As to expression, small intestine.

It is found in the endoplasmic reticulum membrane. Its subcellular location is the microsome membrane. The catalysed reaction is an organic molecule + reduced [NADPH--hemoprotein reductase] + O2 = an alcohol + oxidized [NADPH--hemoprotein reductase] + H2O + H(+). Functionally, catalyzes the N-demethylation of benzphetamine to formaldehyde. The chain is Cytochrome P450 2J1 (CYP2J1) from Oryctolagus cuniculus (Rabbit).